The chain runs to 153 residues: Cofilin (153 aa).

The 145-residue stretch at 4-148 (SGATVSQDCI…EYDSILKTVS (145 aa)) folds into the ADF-H domain.

The protein belongs to the actin-binding proteins ADF family.

The protein resides in the cytoplasm. The protein localises to the cytoskeleton. It is found in the nucleus matrix. In terms of biological role, controls reversibly actin polymerization and depolymerization in a pH-sensitive manner. It has the ability to bind G- and F-actin in a 1:1 ratio of cofilin to actin. Binding to F-actin is regulated by tropomyosin. It is the major component of intranuclear and cytoplasmic actin rods. Required for accumulation of actin at the cell division site via depolymerizing actin at the cell ends. In association with myosin II has a role in the assembly of the contractile ring via severing actin filaments. Involved in the maintenance of the contractile ring once formed. In association with profilin and capping protein, has a role in the mitotic reorganization of the actin cytoskeleton. The chain is Cofilin (COF1) from Gibberella zeae (strain ATCC MYA-4620 / CBS 123657 / FGSC 9075 / NRRL 31084 / PH-1) (Wheat head blight fungus).